We begin with the raw amino-acid sequence, 176 residues long: MDSQVRQNFHRDCEAAINRMVNMELYASYTYLSMAFYFDRDDIALHNVAKFFKEQSHEEREHAEKLMKDQNKRGGRIVLQDVKKPERDEWGNTLEAMQAALQLEKTVNQALLDLHKVGSDKVDPHLCDFLETEYLEEQVKSIKQLGDYITNLKRLGLPQNGMGEYLFDKHTMGESS.

The Ferritin-like diiron domain maps to 7-156; the sequence is QNFHRDCEAA…DYITNLKRLG (150 aa). 6 residues coordinate Fe cation: Glu24, Glu58, Glu59, His62, Glu104, and Gln138.

Belongs to the ferritin family. As to quaternary structure, oligomer of 24 subunits. The functional molecule is roughly spherical and contains a central cavity into which the polymeric mineral iron core is deposited.

It carries out the reaction 4 Fe(2+) + O2 + 4 H(+) = 4 Fe(3+) + 2 H2O. Functionally, stores iron in a soluble, non-toxic, readily available form. Important for iron homeostasis. Has ferroxidase activity. Iron is taken up in the ferrous form and deposited as ferric hydroxides after oxidation. The protein is Ferritin, higher subunit of Aquarana catesbeiana (American bullfrog).